The following is a 321-amino-acid chain: MQCRLPRGLAGALLTLLCMGLLCLRYHLNLSPQRVQGTPELSQPNPGPPKLQLHDVFIAVKTTRAFHRLRLELLLDTWVSRTREQTFVFTDSPDKGLQERLGSHLVVTNCSAEHSHPALSCKMAAEFDTFLASGLRWFCHVDDDNYVNPRALLQLLRAFPLARDVYVGRPSLNRPIHASEPQPHNRTRLVQFWFATGGAGFCINRKLALKMAPWASGSRFMDTSALIRLPDDCTMGYIIECKLGGRLQPSPLFHSHLETLQLLRTAQLPEQVTLSYGVFEGKLNVIKLQGPFSPEEDPSRFRSLHCLLYPDTPWCPQLGAR.

Topologically, residues Met1–Arg7 are cytoplasmic. A helical; Signal-anchor for type II membrane protein transmembrane segment spans residues Gly8–His27. The Lumenal segment spans residues Leu28–Arg321. Arg70 is a binding site for substrate. An N-linked (GlcNAc...) asparagine glycan is attached at Asn109. 2 cysteine pairs are disulfide-bonded: Cys110–Cys121 and Cys139–Cys202. Asp143 is a substrate binding site. Position 144 (Asp144) interacts with Mn(2+). Asn185 carries an N-linked (GlcNAc...) asparagine glycan. Residue Asp232 is part of the active site. His256 is a Mn(2+) binding site. Cys306 and Cys315 are disulfide-bonded.

It belongs to the glycosyltransferase 31 family. The cofactor is Mn(2+).

Its subcellular location is the golgi apparatus membrane. It carries out the reaction 3-O-(alpha-L-fucosyl)-L-threonyl-[EGF-like domain protein] + UDP-N-acetyl-alpha-D-glucosamine = 3-O-(N-acetyl-beta-D-glucosaminyl-(1-&gt;3)-alpha-L-fucosyl)-L-threonyl-[EGF-like domain protein] + UDP + H(+). The catalysed reaction is 3-O-(alpha-L-fucosyl)-L-seryl-[EGF-like domain protein] + UDP-N-acetyl-alpha-D-glucosamine = 3-O-(N-acetyl-beta-D-glucosaminyl-(1-&gt;3)-alpha-L-fucosyl)-L-seryl-[EGF-like domain protein] + UDP + H(+). Functionally, glycosyltransferase that initiates the elongation of O-linked fucose residues attached to EGF-like repeats in the extracellular domain of Notch molecules. Modulates NOTCH1 activity by modifying O-fucose residues at specific EGF-like domains resulting in inhibition of NOTCH1 activation by JAG1 and enhancement of NOTCH1 activation by DLL1 via an increase in its binding to DLL1. In Homo sapiens (Human), this protein is Beta-1,3-N-acetylglucosaminyltransferase manic fringe.